The chain runs to 276 residues: Formamidopyrimidine-DNA glycosylase (276 aa).

Catalysis depends on P2, which acts as the Schiff-base intermediate with DNA. The active-site Proton donor is the E3. K58 serves as the catalytic Proton donor; for beta-elimination activity. DNA is bound by residues H92, R111, and K154. The FPG-type zinc finger occupies 239–273; the sequence is QVYGHAGEECNNCGTILEKIKVNGRGTTFCPHCQV. R263 (proton donor; for delta-elimination activity) is an active-site residue.

Belongs to the FPG family. In terms of assembly, monomer. Zn(2+) is required as a cofactor.

The enzyme catalyses Hydrolysis of DNA containing ring-opened 7-methylguanine residues, releasing 2,6-diamino-4-hydroxy-5-(N-methyl)formamidopyrimidine.. It catalyses the reaction 2'-deoxyribonucleotide-(2'-deoxyribose 5'-phosphate)-2'-deoxyribonucleotide-DNA = a 3'-end 2'-deoxyribonucleotide-(2,3-dehydro-2,3-deoxyribose 5'-phosphate)-DNA + a 5'-end 5'-phospho-2'-deoxyribonucleoside-DNA + H(+). Functionally, involved in base excision repair of DNA damaged by oxidation or by mutagenic agents. Acts as a DNA glycosylase that recognizes and removes damaged bases. Has a preference for oxidized purines, such as 7,8-dihydro-8-oxoguanine (8-oxoG). Has AP (apurinic/apyrimidinic) lyase activity and introduces nicks in the DNA strand. Cleaves the DNA backbone by beta-delta elimination to generate a single-strand break at the site of the removed base with both 3'- and 5'-phosphates. This is Formamidopyrimidine-DNA glycosylase from Lactobacillus johnsonii (strain CNCM I-12250 / La1 / NCC 533).